Reading from the N-terminus, the 670-residue chain is Receptor for retinol uptake STRA6 (670 aa).

Residues 1-50 lie on the Extracellular side of the membrane; it reads MESQASENGSQTSSGVTDDYSSWYIEEPLGAEEVQPEGVIPLCQLTAPPA. N-linked (GlcNAc...) asparagine glycosylation occurs at asparagine 8. The helical transmembrane segment at 51–71 threads the bilayer; that stretch reads LLHACLASLSFLVLLLLALLV. Residues 72–97 lie on the Cytoplasmic side of the membrane; the sequence is RRRRLWPRCGHRGLGLPSPVDFLAGD. Residues 98–118 traverse the membrane as a helical segment; it reads LSWTVPAAVFVVLFSNLCLLL. The Extracellular portion of the chain corresponds to 119–144; sequence PDENPLPFLNLTAASSPDGEMETSRG. The N-linked (GlcNAc...) asparagine glycan is linked to asparagine 128. Residues 145 to 165 traverse the membrane as a helical segment; that stretch reads PWKLLALLYYPALYYPLAACA. Residues 166 to 168 are Cytoplasmic-facing; the sequence is SAG. The chain crosses the membrane as a helical span at residues 169-189; sequence HQAAFLLGTVLSWAHFGVQVW. Over 190–205 the chain is Extracellular; the sequence is QKAECPQDPKIYKHYS. A helical membrane pass occupies residues 206-226; the sequence is LLASLPLLLGLGFLSLWYPVQ. Topologically, residues 227 to 296 are cytoplasmic; sequence LVQSLRHRTG…PQPGFRLPLK (70 aa). An interaction with RBP1 region spans residues 235–294; the sequence is TGAGSQGLQTSYSEKYLRTLLCPKKLDSCSHPASKRSLLSRAWAFSHHSIYTPQPGFRLP. The helical transmembrane segment at 297 to 317 threads the bilayer; it reads LVISATLTGTATYQVALLLLV. The Extracellular portion of the chain corresponds to 318–368; it reads SVVPTVQKVRAGINTDVSYLLAGFGIVLSEDRQEVVELVKHHLWTVEACYI. The chain crosses the membrane as a helical span at residues 369 to 389; the sequence is SALVLSCASTFLLLIRSLRTH. Over 390–423 the chain is Cytoplasmic; that stretch reads RANLQALHRGAALDLDPPLQSIHPSRQAIVSWMS. Residues 424–444 traverse the membrane as a helical segment; sequence FCAYQTAFSCLGLLVQQVIFF. Over 445–474 the chain is Extracellular; the sequence is LGTTSLAFLVFVPLLHGRNLLLLRSLESTW. A helical membrane pass occupies residues 475 to 495; it reads PFWLTVALAVILQNIAANWIF. Topologically, residues 496–510 are cytoplasmic; the sequence is LRTHHGYPELTNRRM. Positions 511–548 form an intramembrane region, helical; the sequence is LCVATFLLFPINMLVGAIMAVWRVLISSLYNTVHLGQM. At 549–670 the chain is on the cytoplasmic side; the sequence is DLSLLPQRAA…TSAKANGTQP (122 aa). A Phosphotyrosine modification is found at tyrosine 644.

Homodimer. Interacts with JAK2 and STAT5. Interacts (via extracellular domains) with RBP4. Interacts (via cytoplasmic domains) with RBP1. Phosphorylated on tyrosine residues in response to RBP4 binding. Phosphorylation requires the presence of LRAT, suggesting it may be triggered by the uptake of retinol that is then metabolized within the cell to retinoids that function as signaling molecules. As to expression, widely expressed in the embryo. Detected in adult in the retinal pigment epithelium in the eye. In the adult, is highly expressed in cells that compose blood-organ barriers in the brain (choroid plexus and the brain microvascular), in testis (the basal layer of the seminiferous epithelium), in the yolk sac, and in the chorioallantoic placenta. Detected in white adipose tissue and skeletal muscle, but not in liver (at protein level). Widely expressed in adult, with high expression levels in the eye. Detected in brain, cerebellum, testis, pituitary, pancreas, kidney, spleen, and female genital tract; and at very low levels in heart and lung. Not detected in liver.

Its subcellular location is the cell membrane. Its function is as follows. Functions as a retinol transporter. Accepts all-trans retinol from the extracellular retinol-binding protein RBP4, facilitates retinol transport across the cell membrane, and then transfers retinol to the cytoplasmic retinol-binding protein RBP1. Retinol uptake is enhanced by LRAT, an enzyme that converts retinol to all-trans retinyl esters, the storage forms of vitamin A. Contributes to the activation of a signaling cascade that depends on retinol transport and LRAT-dependent generation of retinol metabolites that then trigger activation of JAK2 and its target STAT5, and ultimately increase the expression of SOCS3 and inhibit cellular responses to insulin. Important for the homeostasis of vitamin A and its derivatives, such as retinoic acid and 11-cis-retinal. STRA6-mediated transport is particularly important in the eye, and under conditions of dietary vitamin A deficiency. Does not transport retinoic acid. The chain is Receptor for retinol uptake STRA6 (Stra6) from Mus musculus (Mouse).